The primary structure comprises 585 residues: Nitrogen permease regulator 3-like protein (585 aa).

Residues 117 to 157 are disordered; that stretch reads GEWAKRRKPRTTVESNASSSHLVSKPESSHPSTGSFEVKSS. Over residues 128-138 the composition is skewed to polar residues; the sequence is TVESNASSSHL. Residues 148 to 157 show a composition bias toward low complexity; that stretch reads STGSFEVKSS.

The protein belongs to the NPR3 family.

This is Nitrogen permease regulator 3-like protein from Schizosaccharomyces pombe (strain 972 / ATCC 24843) (Fission yeast).